Reading from the N-terminus, the 633-residue chain is Chaperone protein HtpG (633 aa).

The segment at 1-344 (MSLQPQAETL…SNDLPLNISR (344 aa)) is a; substrate-binding. A b region spans residues 345–560 (ELLQSNEVIN…ENEMSGHLQR (216 aa)). Residues 561–633 (LLIQTGQDFM…KGLNELLLDS (73 aa)) are c.

Belongs to the heat shock protein 90 family. As to quaternary structure, homodimer.

The protein localises to the cytoplasm. Its function is as follows. Molecular chaperone. Has ATPase activity. This chain is Chaperone protein HtpG, found in Coxiella burnetii (strain RSA 331 / Henzerling II).